The sequence spans 31 residues: Nemertide alpha-2 (31 aa).

Cystine bridges form between Cys2–Cys16, Cys9–Cys20, and Cys15–Cys26. Residues Pro28 and Pro29 each carry the 4-hydroxyproline modification.

Belongs to the nemertide family. As to expression, confined to the epidermis and to the mucus layer.

The protein resides in the secreted. Functionally, toxin with similar potency against both insect and mammalian sodium channels (Nav). Delays the inactivation of most Nav channels tested (B.germanica (BgNav1); EC(50)=87.2 nM, human Nav1.1/SCN1A; EC(50)=125.8 nM, rat Nav1.2/SCN2A; EC(50)=97.9 nM, rat Nav1.3/SCN3A; EC(50)=127.7 nM, rat Nav1.4/SCN4A; EC(50)=1150.3 nM, human Nav1.5/SCN5A; EC(50)=149.2 nM, mouse Nav1.6/SCN8A; EC(50)=1361.8 nM, human Nav1.9/SCN9A; EC(50)=1296.7 nM). Inactivation is completely prevented by a concentration of 1 uM, resulting in sustained, non-inactivating current. In addition, the toxin significantly enhances the recovery from inactivation, and the open state is not required for the toxin to interact with the channel. In vivo, injection into brine shrimp (Artemia salina) stops movement or causes death after 24 hours (EC(50)=2.9 uM). The chain is Nemertide alpha-2 from Lineus longissimus (Bootlace worm).